A 117-amino-acid chain; its full sequence is Transcription elongation factor SPT4 (117 aa).

The tract at residues 1-40 (MALETVPKDLRHLRACLLCSLVKTIDQFEYDGCDNCDAYL) is interaction with SUPT5H. The C4-type zinc finger occupies 16 to 36 (CLLCSLVKTIDQFEYDGCDNC).

It belongs to the SPT4 family. Interacts with SUPT5H to form the DSIF complex. DSIF interacts with RNA polymerase II and with the positive transcription elongation factor b complex (P-TEFb complex), which is composed of CDK9 and cyclin-T.

It localises to the nucleus. Functionally, may function as a component of the DRB sensitivity-inducing factor complex (DSIF complex), which regulates transcription elongation by RNA polymerase II. Probably enhances transcriptional pausing at sites proximal to the promoter, which may in turn facilitate the assembly of an elongation competent RNA polymerase II complex. In Xenopus laevis (African clawed frog), this protein is Transcription elongation factor SPT4 (supt4h1).